We begin with the raw amino-acid sequence, 303 residues long: Glyceraldehyde-3-phosphate dehydrogenase (303 aa).

NAD(+) contacts are provided by residues R6–I7, D28, R72, and T114. Residues S143–T145, T174, T203–G204, and R226 each bind D-glyceraldehyde 3-phosphate. Residue C144 is the Nucleophile of the active site.

The protein belongs to the glyceraldehyde-3-phosphate dehydrogenase family. As to quaternary structure, homotetramer.

The protein localises to the cytoplasm. It catalyses the reaction D-glyceraldehyde 3-phosphate + phosphate + NAD(+) = (2R)-3-phospho-glyceroyl phosphate + NADH + H(+). It participates in carbohydrate degradation; glycolysis; pyruvate from D-glyceraldehyde 3-phosphate: step 1/5. In terms of biological role, catalyzes the oxidative phosphorylation of glyceraldehyde 3-phosphate (G3P) to 1,3-bisphosphoglycerate (BPG) using the cofactor NAD. The first reaction step involves the formation of a hemiacetal intermediate between G3P and a cysteine residue, and this hemiacetal intermediate is then oxidized to a thioester, with concomitant reduction of NAD to NADH. The reduced NADH is then exchanged with the second NAD, and the thioester is attacked by a nucleophilic inorganic phosphate to produce BPG. The protein is Glyceraldehyde-3-phosphate dehydrogenase (gap) of Klebsiella pneumoniae.